The sequence spans 400 residues: Tryptophan synthase beta chain (400 aa).

K91 bears the N6-(pyridoxal phosphate)lysine mark.

It belongs to the TrpB family. In terms of assembly, tetramer of two alpha and two beta chains. Requires pyridoxal 5'-phosphate as cofactor.

It carries out the reaction (1S,2R)-1-C-(indol-3-yl)glycerol 3-phosphate + L-serine = D-glyceraldehyde 3-phosphate + L-tryptophan + H2O. It functions in the pathway amino-acid biosynthesis; L-tryptophan biosynthesis; L-tryptophan from chorismate: step 5/5. Its function is as follows. The beta subunit is responsible for the synthesis of L-tryptophan from indole and L-serine. This chain is Tryptophan synthase beta chain, found in Listeria monocytogenes serotype 4b (strain CLIP80459).